Consider the following 340-residue polypeptide: Protein-arginine kinase (340 aa).

The Phosphagen kinase C-terminal domain maps to 21 to 242; it reads VVLSSRIRLA…EQIIMQERVA (222 aa). ATP is bound by residues 24–28, His79, Arg113, 164–168, and 195–200; these read SSRIR, RASVM, and RGIYGE.

The protein belongs to the ATP:guanido phosphotransferase family.

It carries out the reaction L-arginyl-[protein] + ATP = N(omega)-phospho-L-arginyl-[protein] + ADP + H(+). In terms of biological role, catalyzes the specific phosphorylation of arginine residues in proteins. The polypeptide is Protein-arginine kinase (Listeria monocytogenes serovar 1/2a (strain ATCC BAA-679 / EGD-e)).